Consider the following 416-residue polypeptide: Enterobactin exporter EntS (416 aa).

Residues 1-21 lie on the Cytoplasmic side of the membrane; sequence MNKQSWLLNLSLLKTHPAFRA. The chain crosses the membrane as a helical span at residues 22-42; the sequence is VFLARFISIVSLGLLGVAVPV. At 43-55 the chain is on the periplasmic side; the sequence is QIQMMTHSTWQVG. Residues 56 to 76 traverse the membrane as a helical segment; it reads LSVTLTGGAMFVGLMVGGVLA. At 77–83 the chain is on the cytoplasmic side; it reads DRYERKK. Residues 84–104 traverse the membrane as a helical segment; sequence VILLARGTCGIGFIGLCLNAL. At 105–109 the chain is on the periplasmic side; it reads LPEPS. A helical membrane pass occupies residues 110 to 130; sequence LLAIYLLGLWDGFFASLGVTA. The Cytoplasmic segment spans residues 131 to 156; it reads LLAATPALVGRENLMQAGALTMLTVR. Residues 157–177 form a helical membrane-spanning segment; that stretch reads LGSVISPMIGGLLLATGGVAW. Asparagine 178 is a topological domain (periplasmic). The chain crosses the membrane as a helical span at residues 179–199; it reads YGLAAAGTFITLLPLLSLPAL. The Cytoplasmic segment spans residues 200–218; that stretch reads PPPPQPREHPLKSLLAGFR. The chain crosses the membrane as a helical span at residues 219-239; sequence FLLASPLVGGIALLGGLLTMA. Residues 240-256 lie on the Periplasmic side of the membrane; sequence SAVRVLYPALADNWQMS. A helical membrane pass occupies residues 257-277; that stretch reads AAEIGFLYAAIPLGAAIGALT. Over 278 to 287 the chain is Cytoplasmic; it reads SGKLAHSARP. Residues 288 to 307 traverse the membrane as a helical segment; that stretch reads GLLMLLSTLGSFLAIGLFGL. Over 308–313 the chain is Periplasmic; that stretch reads MPMWIL. The helical transmembrane segment at 314–336 threads the bilayer; it reads GVVCLALFGWLSAVSSLLQYTML. The Cytoplasmic portion of the chain corresponds to 337–356; that stretch reads QTQTPEAMLGRINGLWTAQN. A helical membrane pass occupies residues 357–377; the sequence is VTGDAIGAALLGGLGAMMTPV. Position 378 (alanine 378) is a topological domain, periplasmic. Residues 379–399 traverse the membrane as a helical segment; that stretch reads SASASGFGLLIIGVLLLLVLV. Residues 400 to 416 are Cytoplasmic-facing; that stretch reads ELRRFRQTPPQVTASDS.

This sequence belongs to the major facilitator superfamily. EntS (TC 2.A.1.38) family.

The protein localises to the cell inner membrane. Functionally, component of an export pathway for enterobactin. The polypeptide is Enterobactin exporter EntS (Shigella boydii serotype 18 (strain CDC 3083-94 / BS512)).